We begin with the raw amino-acid sequence, 437 residues long: GTPase Obg (437 aa).

Residues 2 to 160 (SMFLDTAKIK…RNLELELKVL (159 aa)) enclose the Obg domain. In terms of domain architecture, OBG-type G spans 161-338 (ADVGLVGFPS…LLEATAELLE (178 aa)). Residues 167 to 174 (GFPSVGKS), 192 to 196 (FTTIV), 214 to 217 (DLPG), 284 to 287 (NKMD), and 319 to 321 (SGI) each bind GTP. The Mg(2+) site is built by serine 174 and threonine 194. The 79-residue stretch at 359–437 (GFNPDEPEFA…IGKFEFEFVD (79 aa)) folds into the OCT domain.

Belongs to the TRAFAC class OBG-HflX-like GTPase superfamily. OBG GTPase family. In terms of assembly, monomer. Requires Mg(2+) as cofactor.

It localises to the cytoplasm. An essential GTPase which binds GTP, GDP and possibly (p)ppGpp with moderate affinity, with high nucleotide exchange rates and a fairly low GTP hydrolysis rate. Plays a role in control of the cell cycle, stress response, ribosome biogenesis and in those bacteria that undergo differentiation, in morphogenesis control. This is GTPase Obg from Streptococcus suis (strain 05ZYH33).